Consider the following 501-residue polypeptide: Probable cytosol aminopeptidase (501 aa).

2 residues coordinate Mn(2+): lysine 268 and aspartate 273. The active site involves lysine 280. Mn(2+) contacts are provided by aspartate 291, aspartate 350, and glutamate 352. Residue arginine 354 is part of the active site.

Belongs to the peptidase M17 family. It depends on Mn(2+) as a cofactor.

It is found in the cytoplasm. The enzyme catalyses Release of an N-terminal amino acid, Xaa-|-Yaa-, in which Xaa is preferably Leu, but may be other amino acids including Pro although not Arg or Lys, and Yaa may be Pro. Amino acid amides and methyl esters are also readily hydrolyzed, but rates on arylamides are exceedingly low.. The catalysed reaction is Release of an N-terminal amino acid, preferentially leucine, but not glutamic or aspartic acids.. Presumably involved in the processing and regular turnover of intracellular proteins. Catalyzes the removal of unsubstituted N-terminal amino acids from various peptides. This is Probable cytosol aminopeptidase from Nitrosococcus oceani (strain ATCC 19707 / BCRC 17464 / JCM 30415 / NCIMB 11848 / C-107).